The following is a 467-amino-acid chain: Nuclear distribution protein nudF (467 aa).

The LisH domain occupies 9–41 (QAEELHKSIIAYLASVNLTESSAALRAELGDSV). Residues 60 to 87 (TSVVRLQKKIMDLESRCAALQSELDSAT) are a coiled coil. WD repeat units follow at residues 113 to 154 (GHRN…RTVK), 156 to 196 (HTKA…KNIR), 200 to 247 (GHDH…CVKT), 250 to 289 (GHVD…TKST), 292 to 352 (GHEH…IKTL), 354 to 393 (GHDN…KCVR), 398 to 428 (AHGH…NGTP), and 429 to 466 (AATS…RIFA). The tract at residues 417-439 (GANGEAETNGTPAATSTTNGVRP) is disordered. The span at 422–436 (AETNGTPAATSTTNG) shows a compositional bias: polar residues.

The protein belongs to the WD repeat LIS1/nudF family. As to quaternary structure, self-associates. Interacts with nudE and dynein.

It is found in the cytoplasm. Its subcellular location is the cytoskeleton. The protein localises to the spindle pole. In terms of biological role, positively regulates the activity of the minus-end directed microtubule motor protein dynein. May enhance dynein-mediated microtubule sliding by targeting dynein to the microtubule plus end. Required for nuclear migration during vegetative growth as well as development. Required for retrograde early endosome (EE) transport from the hyphal tip. Required for localization of dynein to the mitotic spindle poles. Recruits additional proteins to the dynein complex at SPBs. This is Nuclear distribution protein nudF from Aspergillus fumigatus (strain CBS 144.89 / FGSC A1163 / CEA10) (Neosartorya fumigata).